The chain runs to 353 residues: Photosystem II D2 protein (353 aa).

Thr-2 is subject to N-acetylthreonine. A Phosphothreonine modification is found at Thr-2. Residues 41 to 61 form a helical membrane-spanning segment; it reads CAYFALGGWFTGTTFVTSWYT. His-118 serves as a coordination point for chlorophyll a. A helical transmembrane segment spans residues 125–141; that stretch reads GFMLRQFELARSVQLRP. Pheophytin a contacts are provided by Gln-130 and Asn-143. Residues 153 to 166 traverse the membrane as a helical segment; sequence VFVSVFLIYPLGQS. His-198 provides a ligand contact to chlorophyll a. Residues 208-228 traverse the membrane as a helical segment; it reads AALLCAIHGATVENTLFEDGD. A plastoquinone is bound by residues His-215 and Phe-262. Residue His-215 coordinates Fe cation. Residue His-269 participates in Fe cation binding. Residues 279 to 295 traverse the membrane as a helical segment; it reads GLWMSALGVVGLALNLR.

This sequence belongs to the reaction center PufL/M/PsbA/D family. PSII is composed of 1 copy each of membrane proteins PsbA, PsbB, PsbC, PsbD, PsbE, PsbF, PsbH, PsbI, PsbJ, PsbK, PsbL, PsbM, PsbT, PsbX, PsbY, PsbZ, Psb30/Ycf12, at least 3 peripheral proteins of the oxygen-evolving complex and a large number of cofactors. It forms dimeric complexes. The cofactor is The D1/D2 heterodimer binds P680, chlorophylls that are the primary electron donor of PSII, and subsequent electron acceptors. It shares a non-heme iron and each subunit binds pheophytin, quinone, additional chlorophylls, carotenoids and lipids. There is also a Cl(-1) ion associated with D1 and D2, which is required for oxygen evolution. The PSII complex binds additional chlorophylls, carotenoids and specific lipids..

It is found in the plastid. The protein resides in the chloroplast thylakoid membrane. It carries out the reaction 2 a plastoquinone + 4 hnu + 2 H2O = 2 a plastoquinol + O2. Photosystem II (PSII) is a light-driven water:plastoquinone oxidoreductase that uses light energy to abstract electrons from H(2)O, generating O(2) and a proton gradient subsequently used for ATP formation. It consists of a core antenna complex that captures photons, and an electron transfer chain that converts photonic excitation into a charge separation. The D1/D2 (PsbA/PsbD) reaction center heterodimer binds P680, the primary electron donor of PSII as well as several subsequent electron acceptors. D2 is needed for assembly of a stable PSII complex. In Nymphaea alba (White water-lily), this protein is Photosystem II D2 protein.